Reading from the N-terminus, the 442-residue chain is tRNA-2-methylthio-N(6)-dimethylallyladenosine synthase (442 aa).

In terms of domain architecture, MTTase N-terminal spans 5–122 (KKVFIKTLGC…LPEMIKQKQK (118 aa)). Residues Cys14, Cys51, Cys85, Cys159, Cys163, and Cys166 each contribute to the [4Fe-4S] cluster site. Positions 145 to 378 (KAEGAKAYVS…DLLNSNAQII (234 aa)) constitute a Radical SAM core domain. Residues 380-442 (RQMVGTNQRI…LPNSLRGELI (63 aa)) enclose the TRAM domain.

It belongs to the methylthiotransferase family. MiaB subfamily. In terms of assembly, monomer. It depends on [4Fe-4S] cluster as a cofactor.

The protein resides in the cytoplasm. The enzyme catalyses N(6)-dimethylallyladenosine(37) in tRNA + (sulfur carrier)-SH + AH2 + 2 S-adenosyl-L-methionine = 2-methylsulfanyl-N(6)-dimethylallyladenosine(37) in tRNA + (sulfur carrier)-H + 5'-deoxyadenosine + L-methionine + A + S-adenosyl-L-homocysteine + 2 H(+). Catalyzes the methylthiolation of N6-(dimethylallyl)adenosine (i(6)A), leading to the formation of 2-methylthio-N6-(dimethylallyl)adenosine (ms(2)i(6)A) at position 37 in tRNAs that read codons beginning with uridine. This Francisella tularensis subsp. holarctica (strain LVS) protein is tRNA-2-methylthio-N(6)-dimethylallyladenosine synthase.